The primary structure comprises 325 residues: Tyrosine phosphatase H2 (325 aa).

One can recognise a Tyrosine-protein phosphatase domain in the interval 27 to 295 (VTREHEKIMA…FFCYRVMERY (269 aa)). Residue Cys-236 is the Phosphocysteine intermediate of the active site.

It belongs to the protein-tyrosine phosphatase family.

It is found in the host cytoplasm. It carries out the reaction O-phospho-L-tyrosyl-[protein] + H2O = L-tyrosyl-[protein] + phosphate. In terms of biological role, suppresses host immune cell adhesion and phagocytosis. Triggers host mitochondrial membrane depolarization and caspase-dependent apoptosis. The sequence is that of Tyrosine phosphatase H2 (H2) from Microplitis demolitor bracovirus (isolate Webb) (MdBV).